Here is a 143-residue protein sequence, read N- to C-terminus: UPF0651 protein P31B10.02, mitochondrial (143 aa).

Residues 48 to 93 enclose the Oxidoreductase-like domain; it reads IYDGIRVPPKPEEPLNCCQSGCAICVWDVYADDLEEYNRARRKAKR.

This sequence belongs to the UPF0651 family.

Its subcellular location is the mitochondrion. This chain is UPF0651 protein P31B10.02, mitochondrial, found in Schizosaccharomyces pombe (strain 972 / ATCC 24843) (Fission yeast).